A 175-amino-acid polypeptide reads, in one-letter code: Adenine phosphoribosyltransferase (175 aa).

Belongs to the purine/pyrimidine phosphoribosyltransferase family. Homodimer.

It localises to the cytoplasm. The catalysed reaction is AMP + diphosphate = 5-phospho-alpha-D-ribose 1-diphosphate + adenine. It participates in purine metabolism; AMP biosynthesis via salvage pathway; AMP from adenine: step 1/1. Catalyzes a salvage reaction resulting in the formation of AMP, that is energically less costly than de novo synthesis. The protein is Adenine phosphoribosyltransferase of Oenococcus oeni (strain ATCC BAA-331 / PSU-1).